Here is a 348-residue protein sequence, read N- to C-terminus: 3-keto-steroid reductase (348 aa).

NADP(+)-binding residues include L18, T41, and R47. Active-site proton donor residues include S180 and Y203. Residues Y203, K207, and S238 each coordinate NADP(+). Residue K207 is the Lowers pKa of active site Tyr of the active site.

Belongs to the short-chain dehydrogenases/reductases (SDR) family. ERG27 subfamily.

The catalysed reaction is a 3beta-hydroxysteroid + NADP(+) = a 3-oxosteroid + NADPH + H(+). The protein operates within steroid biosynthesis; zymosterol biosynthesis; zymosterol from lanosterol: step 5/6. In terms of biological role, responsible for the reduction of the keto group on the C-3 of sterols. The sequence is that of 3-keto-steroid reductase (ERG27) from Candida glabrata (strain ATCC 2001 / BCRC 20586 / JCM 3761 / NBRC 0622 / NRRL Y-65 / CBS 138) (Yeast).